The sequence spans 144 residues: 3-dehydroquinate dehydratase (144 aa).

Tyrosine 24 serves as the catalytic Proton acceptor. Residues asparagine 76, histidine 82, and aspartate 89 each contribute to the substrate site. Histidine 102 serves as the catalytic Proton donor. Substrate-binding positions include 103–104 (LS) and arginine 113.

Belongs to the type-II 3-dehydroquinase family. In terms of assembly, homododecamer.

The catalysed reaction is 3-dehydroquinate = 3-dehydroshikimate + H2O. It participates in metabolic intermediate biosynthesis; chorismate biosynthesis; chorismate from D-erythrose 4-phosphate and phosphoenolpyruvate: step 3/7. Its function is as follows. Catalyzes a trans-dehydration via an enolate intermediate. The sequence is that of 3-dehydroquinate dehydratase from Nitrosomonas europaea (strain ATCC 19718 / CIP 103999 / KCTC 2705 / NBRC 14298).